The following is a 176-amino-acid chain: Inner membrane-spanning protein YciB (176 aa).

6 helical membrane passes run 3 to 23, 24 to 44, 49 to 69, 72 to 92, 121 to 141, and 149 to 169; these read FLFD…WGIF, TATA…AFRH, TMLW…LVLH, KFIQ…LLAA, VAWA…VHNF, and FKLF…SLWL.

The protein belongs to the YciB family.

The protein resides in the cell inner membrane. In terms of biological role, plays a role in cell envelope biogenesis, maintenance of cell envelope integrity and membrane homeostasis. In Burkholderia orbicola (strain MC0-3), this protein is Inner membrane-spanning protein YciB.